A 282-amino-acid polypeptide reads, in one-letter code: Elongation factor Ts (282 aa).

The involved in Mg(2+) ion dislocation from EF-Tu stretch occupies residues 79 to 82; it reads TDFV.

Belongs to the EF-Ts family.

The protein localises to the cytoplasm. Functionally, associates with the EF-Tu.GDP complex and induces the exchange of GDP to GTP. It remains bound to the aminoacyl-tRNA.EF-Tu.GTP complex up to the GTP hydrolysis stage on the ribosome. This Shewanella loihica (strain ATCC BAA-1088 / PV-4) protein is Elongation factor Ts.